The chain runs to 119 residues: NADH-quinone oxidoreductase subunit A (119 aa).

3 helical membrane passes run 9–29, 63–83, and 88–108; these read VILFILVGVGVGVAPQVLGFL, LVAILFILFDLEIAFLFPWAV, and IGATGFWAMMIFLGILVVGFV.

It belongs to the complex I subunit 3 family. NDH-1 is composed of 14 different subunits. Subunits NuoA, H, J, K, L, M, N constitute the membrane sector of the complex.

It is found in the cell inner membrane. It carries out the reaction a quinone + NADH + 5 H(+)(in) = a quinol + NAD(+) + 4 H(+)(out). Its function is as follows. NDH-1 shuttles electrons from NADH, via FMN and iron-sulfur (Fe-S) centers, to quinones in the respiratory chain. The immediate electron acceptor for the enzyme in this species is believed to be ubiquinone. Couples the redox reaction to proton translocation (for every two electrons transferred, four hydrogen ions are translocated across the cytoplasmic membrane), and thus conserves the redox energy in a proton gradient. This is NADH-quinone oxidoreductase subunit A from Leptothrix cholodnii (strain ATCC 51168 / LMG 8142 / SP-6) (Leptothrix discophora (strain SP-6)).